The chain runs to 769 residues: MDIGKKHVIPKSQYRRKRREFFHNEDREENLNQHQDKQNIDNTTSKKADKQIHKDSIDKHERFKNSLSSHLEQRNRDVNENKAEESKSNQDSKSAYNRDHYLTDDVSKKQNSLDSVDQDTVKSKYYEQNSEATLSTKSTDKVESTEMRKLSSDKNKVGHEEQHVLSKPSEHDKETRIDSESSRTDSDSSMQTEKIKKDSSDGNKSSNLKSEVISDKSNTVPKLSESDDEVNNQKPLTLPEEQKLKRQQSQNEQTKTYTYGDSEQNDKSNHENDLSHHIPSISDDKDNVMRENHIVDDNPDNDINTPSLSKTDDDRKLDEKIHVEDKHKQNADSSETVGYQSQSTASHRSTEKRNISINDHDKLNGQKTNTKTSANNNQKKATSKLNKGRATNNNYSDILKKFWMMYWPKLVILMGIIILIVILNAIFNNVNKNDRMNDNNDADAQKYTTTMKNANNTVKSVVTVENETSKDSSLPKDKASQDEVGSGVVYKKSGDTLYIVTNAHVVGDKENQKITFSNNKSVVGKVLGKDKWSDLAVVKATSSDSSVKEIAIGDSNNLVLGEPILVVGNPLGVDFKGTVTEGIISGLNRNVPIDFDKDNKYDMLMKAFQIDASVNPGNSGGAVVNREGKLIGVVAAKISMPNVENMSFAIPVNEVQKIVKDLETKGKIDYPDVGVKMKNIASLNSFERQAVKLPGKVKNGVVVDQVDNNGLADQSGLKKGDVITELDGKLLEDDLRFRQIIFSHKDDLKSITAKIYRDGKEKEINIKLK.

Residues 1-20 (MDIGKKHVIPKSQYRRKRRE) are compositionally biased toward basic residues. The tract at residues 1–390 (MDIGKKHVIP…ATSKLNKGRA (390 aa)) is disordered. Composition is skewed to basic and acidic residues over residues 21–64 (FFHN…ERFK) and 71–108 (LEQRNRDVNENKAEESKSNQDSKSAYNRDHYLTDDVSK). A compositionally biased stretch (polar residues) spans 126-137 (YEQNSEATLSTK). The segment covering 138–186 (STDKVESTEMRKLSSDKNKVGHEEQHVLSKPSEHDKETRIDSESSRTDS) has biased composition (basic and acidic residues). A compositionally biased stretch (polar residues) spans 247–262 (QQSQNEQTKTYTYGDS). Basic and acidic residues-rich tracts occupy residues 264–296 (QNDKSNHENDLSHHIPSISDDKDNVMRENHIVD) and 310–330 (KTDDDRKLDEKIHVEDKHKQN). Positions 331–347 (ADSSETVGYQSQSTASH) are enriched in polar residues. The segment covering 348 to 364 (RSTEKRNISINDHDKLN) has biased composition (basic and acidic residues). The segment covering 365–390 (GQKTNTKTSANNNQKKATSKLNKGRA) has biased composition (polar residues). A helical membrane pass occupies residues 410-430 (LVILMGIIILIVILNAIFNNV). Catalysis depends on charge relay system residues His504, Asp534, and Ser619. The 54-residue stretch at 680 to 733 (IASLNSFERQAVKLPGKVKNGVVVDQVDNNGLADQSGLKKGDVITELDGKLLED) folds into the PDZ domain.

It belongs to the peptidase S1C family.

The protein localises to the cell membrane. In Staphylococcus aureus (strain USA300), this protein is Serine protease HtrA-like.